Consider the following 211-residue polypeptide: Thymidylate kinase (211 aa).

An ATP-binding site is contributed by 11-18 (GPDGAGKT).

The protein belongs to the thymidylate kinase family.

The catalysed reaction is dTMP + ATP = dTDP + ADP. Phosphorylation of dTMP to form dTDP in both de novo and salvage pathways of dTTP synthesis. The sequence is that of Thymidylate kinase from Streptococcus equi subsp. equi (strain 4047).